The sequence spans 376 residues: uncharacterized protein (376 aa).

Positions 82–372 (KIYDDSAVEK…ATSGILWRAL (291 aa)) constitute a Peptidase M14 domain. Residues histidine 138, glutamate 141, and histidine 283 each coordinate Zn(2+). The active-site Proton donor/acceptor is the glutamate 344.

It belongs to the peptidase M14 family. The cofactor is Zn(2+).

This is an uncharacterized protein from Bacillus subtilis (strain 168).